A 338-amino-acid polypeptide reads, in one-letter code: GTPase Obg (338 aa).

Residues methionine 1–leucine 159 enclose the Obg domain. The 172-residue stretch at alanine 160–tryptophan 331 folds into the OBG-type G domain. Residues glycine 166–serine 173, phenylalanine 191–lysine 195, aspartate 213–glycine 216, asparagine 283–aspartate 286, and serine 312–alanine 314 each bind GTP. The Mg(2+) site is built by serine 173 and threonine 193.

The protein belongs to the TRAFAC class OBG-HflX-like GTPase superfamily. OBG GTPase family. Monomer. It depends on Mg(2+) as a cofactor.

The protein localises to the cytoplasm. An essential GTPase which binds GTP, GDP and possibly (p)ppGpp with moderate affinity, with high nucleotide exchange rates and a fairly low GTP hydrolysis rate. Plays a role in control of the cell cycle, stress response, ribosome biogenesis and in those bacteria that undergo differentiation, in morphogenesis control. The protein is GTPase Obg of Geobacter sulfurreducens (strain ATCC 51573 / DSM 12127 / PCA).